Reading from the N-terminus, the 188-residue chain is MVSVNDLKTGLTVKTSDGSIWQVIEFQHVKPGKGAAFVRTKMRNLRNGAIQETTFRGGEKIERAHIERKRMQYLYPMGDTYVFMDNESYEQLELTSAQVKSALPYLLENMEVSIADYEGEILGIELPTSVVLTIVEADPGVKGDTASNVKKNATVETGHVIQVPLFIEPGEKVTVDTRTGEFMGRYNG.

The protein belongs to the elongation factor P family.

It localises to the cytoplasm. The protein operates within protein biosynthesis; polypeptide chain elongation. Functionally, involved in peptide bond synthesis. Stimulates efficient translation and peptide-bond synthesis on native or reconstituted 70S ribosomes in vitro. Probably functions indirectly by altering the affinity of the ribosome for aminoacyl-tRNA, thus increasing their reactivity as acceptors for peptidyl transferase. The sequence is that of Elongation factor P from Exiguobacterium sp. (strain ATCC BAA-1283 / AT1b).